Consider the following 359-residue polypeptide: Olfactory receptor 8S1 (359 aa).

The Extracellular segment spans residues 1-25 (MALGNHSTITEFLLLGLSADPNIRA). N-linked (GlcNAc...) asparagine glycosylation occurs at Asn5. Residues 26–46 (LLFVLFLGIYLLTIMENLMLL) form a helical membrane-spanning segment. Topologically, residues 47–54 (LMIRADSC) are cytoplasmic. The helical transmembrane segment at 55 to 75 (LHKPMYFFLSHLSFVDLCFSS) threads the bilayer. The Extracellular segment spans residues 76-99 (VIVPKMLENLLSQRKTISVEGCLA). Cys97 and Cys189 are oxidised to a cystine. The chain crosses the membrane as a helical span at residues 100–120 (QVFFVFVTAGTEACLLSGMAY). The Cytoplasmic portion of the chain corresponds to 121–139 (DRHAAICRPLLYGQIMGKQ). The chain crosses the membrane as a helical span at residues 140–160 (LYMHLVWGSWGLGFLDALINV). The Extracellular segment spans residues 161 to 197 (LLAVNMVFCEAKIIHHYSYEMPSLLPLSCSDISRSLI). Residues 198-217 (ALLCSTLLHGLGNFLLVFLS) form a helical membrane-spanning segment. Topologically, residues 218–237 (YTRIISTILSISSTSGRSKA) are cytoplasmic. Residues 238–258 (FSTCSAHLTAVTLYYGSGLLR) traverse the membrane as a helical segment. The Extracellular portion of the chain corresponds to 259 to 269 (HLMPNSGSPIE). Residues 270-290 (LIFSVQYTVVTPMLNSLIYSL) form a helical membrane-spanning segment. Over 291 to 359 (KNKEVKGERS…ALRAAPTALP (69 aa)) the chain is Cytoplasmic. The interval 301–338 (LRDSSHLPQLHKGQARWKRPAFTEGRREPGHPELSIPV) is disordered.

The protein belongs to the G-protein coupled receptor 1 family.

Its subcellular location is the cell membrane. Functionally, odorant receptor. The chain is Olfactory receptor 8S1 (OR8S1) from Homo sapiens (Human).